The chain runs to 360 residues: MKTSMQRKLDQLSTRLAELNDLLSRENVTADLDQYRKLTREHAELGPVVEQYALWRQSRSDETAAQELLADPSMRDFAEEEIRSARERMARLEVELQKMLLPKDPNDDRNIFVEIRAGTGGDESALFAGDLLRMYLRFAERQRWQVEMMSESPSDLGGYKEVIVRIAGQGAYSRLKFESGGHRVQRVPATETQGRIHTSACTVAVMPEADEIGEVEINLADLRIDTFRASGAGGQHINKTDSAVRVTHLPTGIVVECQDDRSQHKNKDRALKVLAARIKDKQYHEQHAKEAATRKSLIGSGDRSERIRTYNFPQGRMTDHRINLTLYRLEAIMDGDLDELIGALVSEHQAELLASLGDAD.

Gln-235 carries the post-translational modification N5-methylglutamine.

This sequence belongs to the prokaryotic/mitochondrial release factor family. In terms of processing, methylated by PrmC. Methylation increases the termination efficiency of RF1.

It is found in the cytoplasm. Functionally, peptide chain release factor 1 directs the termination of translation in response to the peptide chain termination codons UAG and UAA. The protein is Peptide chain release factor 1 of Burkholderia multivorans (strain ATCC 17616 / 249).